The following is a 621-amino-acid chain: Putative 5'-3' exonuclease R528 (621 aa).

Belongs to the 5'-3' exonuclease family.

Its subcellular location is the virion. This is Putative 5'-3' exonuclease R528 from Acanthamoeba polyphaga mimivirus (APMV).